A 491-amino-acid polypeptide reads, in one-letter code: Glutamate--tRNA ligase (491 aa).

Positions 10–20 (PSPTGYLHIGG) match the 'HIGH' region motif. Positions 243-247 (KISKR) match the 'KMSKS' region motif. Position 246 (lysine 246) interacts with ATP.

The protein belongs to the class-I aminoacyl-tRNA synthetase family. Glutamate--tRNA ligase type 1 subfamily. In terms of assembly, monomer.

It localises to the cytoplasm. It carries out the reaction tRNA(Glu) + L-glutamate + ATP = L-glutamyl-tRNA(Glu) + AMP + diphosphate. Catalyzes the attachment of glutamate to tRNA(Glu) in a two-step reaction: glutamate is first activated by ATP to form Glu-AMP and then transferred to the acceptor end of tRNA(Glu). The polypeptide is Glutamate--tRNA ligase (Desulfotalea psychrophila (strain LSv54 / DSM 12343)).